The chain runs to 697 residues: MATKSFLKLAADLSSFTDSSPFAKLLDSCIKSKLSAIYVRYVHASVIKSGFSNEIFIQNRLIDAYSKCGSLEDGRQVFDKMPQRNIYTWNSVVTGLTKLGFLDEADSLFRSMPERDQCTWNSMVSGFAQHDRCEEALCYFAMMHKEGFVLNEYSFASVLSACSGLNDMNKGVQVHSLIAKSPFLSDVYIGSALVDMYSKCGNVNDAQRVFDEMGDRNVVSWNSLITCFEQNGPAVEALDVFQMMLESRVEPDEVTLASVISACASLSAIKVGQEVHGRVVKNDKLRNDIILSNAFVDMYAKCSRIKEARFIFDSMPIRNVIAETSMISGYAMAASTKAARLMFTKMAERNVVSWNALIAGYTQNGENEEALSLFCLLKRESVCPTHYSFANILKACADLAELHLGMQAHVHVLKHGFKFQSGEEDDIFVGNSLIDMYVKCGCVEEGYLVFRKMMERDCVSWNAMIIGFAQNGYGNEALELFREMLESGEKPDHITMIGVLSACGHAGFVEEGRHYFSSMTRDFGVAPLRDHYTCMVDLLGRAGFLEEAKSMIEEMPMQPDSVIWGSLLAACKVHRNITLGKYVAEKLLEVEPSNSGPYVLLSNMYAELGKWEDVMNVRKSMRKEGVTKQPGCSWIKIQGHDHVFMVKDKSHPRKKQIHSLLDILIAEMRPEQDHTEIGSLSSEEMDYSSNLLWDNAM.

PPR repeat units lie at residues 18 to 53 (DSSP…GFSN), 54 to 84 (EIFI…MPQR), 85 to 115 (NIYT…MPER), 116 to 150 (DQCT…GFVL), 151 to 185 (NEYS…PFLS), 186 to 216 (DVYI…MGDR), 217 to 251 (NVVS…RVEP), 252 to 282 (DEVT…VVKN), 288 to 322 (DIIL…NVIA), 324 to 349 (TSMI…MAER), 350 to 384 (NVVS…SVCP), 385 to 419 (THYS…GFKF), 426 to 456 (DIFV…MMER), 457 to 491 (DCVS…GEKP), 492 to 527 (DHIT…GVAP), and 528 to 558 (LRDH…MPMQ). The type E motif stretch occupies residues 563–638 (IWGSLLAACK…QPGCSWIKIQ (76 aa)). Residues 639–669 (GHDHVFMVKDKSHPRKKQIHSLLDILIAEMR) are type E(+) motif.

This sequence belongs to the PPR family. PCMP-E subfamily.

This Arabidopsis thaliana (Mouse-ear cress) protein is Pentatricopeptide repeat-containing protein At2g13600 (PCMP-E76).